The sequence spans 391 residues: MKIHEYQAKDILAKYGVAVPRGEVANTLEEAMDVAKRLFAEGAKGVVVKAQIHAGGRGKGGGVKVAKTLEEAEQYAKQILGMQLVTHQTGPQGQKVQRLLIEETAAIDRELYLGIVLDRAAAKLVFMASQAGGMEIEEVAAKDPSAIFKAYIDPAVGFQAYQARQLAFALGLKPTQINDAVKFMMGLYKAYMDTDASLLEINPFITTKDDKLFALDCKINFDDNAMFRHKDLKELRDIAEEDPLEVEASKYALNYIKLDGNIACMVNGAGLAMATMDIIQYAGGMPANFLDVGGGANQQQIEHAFEILLSDKNVQAVFINIFGGILRVDTLAHGVVGAAQKLNVKVPIVLRLEGTNVEEGRKILKDSGLNFIVGDTMQDAAQKVVAAAKGQ.

The 239-residue stretch at 9–247 folds into the ATP-grasp domain; that stretch reads KDILAKYGVA…IAEEDPLEVE (239 aa). ATP-binding positions include Lys49, 56–58, Glu102, Ala105, and Glu110; that span reads GRG. Asn202 and Asp216 together coordinate Mg(2+). Substrate is bound by residues Asn267 and 324–326; that span reads GIL.

The protein belongs to the succinate/malate CoA ligase beta subunit family. Heterotetramer of two alpha and two beta subunits. Mg(2+) serves as cofactor.

It carries out the reaction succinate + ATP + CoA = succinyl-CoA + ADP + phosphate. The enzyme catalyses GTP + succinate + CoA = succinyl-CoA + GDP + phosphate. It functions in the pathway carbohydrate metabolism; tricarboxylic acid cycle; succinate from succinyl-CoA (ligase route): step 1/1. In terms of biological role, succinyl-CoA synthetase functions in the citric acid cycle (TCA), coupling the hydrolysis of succinyl-CoA to the synthesis of either ATP or GTP and thus represents the only step of substrate-level phosphorylation in the TCA. The beta subunit provides nucleotide specificity of the enzyme and binds the substrate succinate, while the binding sites for coenzyme A and phosphate are found in the alpha subunit. This chain is Succinate--CoA ligase [ADP-forming] subunit beta, found in Acidobacterium capsulatum (strain ATCC 51196 / DSM 11244 / BCRC 80197 / JCM 7670 / NBRC 15755 / NCIMB 13165 / 161).